Reading from the N-terminus, the 267-residue chain is 5'-nucleotidase SurE (267 aa).

A divalent metal cation contacts are provided by Asp-9, Asp-10, Ser-40, and Asn-97.

It belongs to the SurE nucleotidase family. Requires a divalent metal cation as cofactor.

It localises to the cytoplasm. It catalyses the reaction a ribonucleoside 5'-phosphate + H2O = a ribonucleoside + phosphate. Nucleotidase that shows phosphatase activity on nucleoside 5'-monophosphates. This is 5'-nucleotidase SurE from Helicobacter pylori (strain ATCC 700392 / 26695) (Campylobacter pylori).